Reading from the N-terminus, the 361-residue chain is UDP-3-O-acylglucosamine N-acyltransferase (361 aa).

The active-site Proton acceptor is the His-253.

This sequence belongs to the transferase hexapeptide repeat family. LpxD subfamily. As to quaternary structure, homotrimer.

The catalysed reaction is a UDP-3-O-[(3R)-3-hydroxyacyl]-alpha-D-glucosamine + a (3R)-hydroxyacyl-[ACP] = a UDP-2-N,3-O-bis[(3R)-3-hydroxyacyl]-alpha-D-glucosamine + holo-[ACP] + H(+). Its pathway is bacterial outer membrane biogenesis; LPS lipid A biosynthesis. Its function is as follows. Catalyzes the N-acylation of UDP-3-O-acylglucosamine using 3-hydroxyacyl-ACP as the acyl donor. Is involved in the biosynthesis of lipid A, a phosphorylated glycolipid that anchors the lipopolysaccharide to the outer membrane of the cell. The chain is UDP-3-O-acylglucosamine N-acyltransferase from Burkholderia thailandensis (strain ATCC 700388 / DSM 13276 / CCUG 48851 / CIP 106301 / E264).